The sequence spans 384 residues: Glucans biosynthesis protein C (384 aa).

10 consecutive transmembrane segments (helical) span residues 17-37 (AWLM…THSW), 54-74 (FIHA…SYML), 91-111 (VGIP…ILLQ), 140-160 (LWFL…FTWF), 173-193 (AISL…YAAI), 212-232 (FIVM…LAFI), 240-260 (FTTP…AYLL), 274-294 (TESV…FSLG), 311-331 (ASLF…AYIT), and 338-358 (LIGF…LYEI).

It belongs to the acyltransferase 3 family. OpgC subfamily.

It localises to the cell membrane. Its pathway is glycan metabolism; osmoregulated periplasmic glucan (OPG) biosynthesis. Functionally, necessary for the succinyl substitution of periplasmic glucans. Could catalyze the transfer of succinyl residues from the cytoplasmic side of the membrane to the nascent glucan backbones on the periplasmic side of the membrane. The sequence is that of Glucans biosynthesis protein C from Salmonella typhimurium (strain LT2 / SGSC1412 / ATCC 700720).